Consider the following 1261-residue polypeptide: Rho GTPase-activating protein 29 (1261 aa).

A phosphoserine mark is found at serine 171, serine 176, serine 179, and serine 190. The F-BAR domain maps to 192-462 (LELDNVLLKN…SAKLYDPGQE (271 aa)). The stretch at 296-418 (RKNEMEKQRK…EILAQLRTLV (123 aa)) forms a coiled coil. The disordered stretch occupies residues 481-501 (NVNKHLNSSQPSGFGPANSLE). Residues serine 499, serine 519, and serine 552 each carry the phosphoserine modification. The segment covering 541-559 (SESTGGSSESRSLDSESIS) has biased composition (low complexity). The segment at 541–600 (SESTGGSSESRSLDSESISPGDFHRKLPRTPSSGTMSSADDLDEREPPSPSETGPNSLGT) is disordered. The segment at 612–657 (THKFRKLRSPTKCRDCEGIVVFQGVECEECLLVCHRKCLENLVIIC) adopts a Phorbol-ester/DAG-type zinc-finger fold. Residues 671–886 (AEFTQVAKKE…FLITYSQKIF (216 aa)) enclose the Rho-GAP domain. 2 positions are modified to phosphoserine: serine 913 and serine 949. Residues 981–1011 (SASQKIEDGKTPKPLSLKSDRSTNNVERHTP) are disordered. Over residues 998–1010 (KSDRSTNNVERHT) the composition is skewed to basic and acidic residues. A phosphoserine mark is found at serine 1019, serine 1144, and serine 1146. Disordered stretches follow at residues 1117 to 1153 (HSINATQPSKPYAEPVRSVREASERRSSDSYPLAPVR) and 1178 to 1238 (GNEE…VNPM). A compositionally biased stretch (basic and acidic residues) spans 1133–1144 (RSVREASERRSS). An interaction with PTPN13/PTPL1 region spans residues 1258-1261 (PQFV).

Interacts with PTPN13/PTPL1. Interacts with RAP2A via its coiled coil domain. Interacts with RASIP1. In terms of tissue distribution, widely expressed. Highly expressed in skeletal muscle and heart. Expressed at intermediate level in placenta, liver and pancreas. Weakly expressed in brain, lung and kidney.

Functionally, GTPase activator for the Rho-type GTPases by converting them to an inactive GDP-bound state. Has strong activity toward RHOA, and weaker activity toward RAC1 and CDC42. May act as a specific effector of RAP2A to regulate Rho. In concert with RASIP1, suppresses RhoA signaling and dampens ROCK and MYH9 activities in endothelial cells and plays an essential role in blood vessel tubulogenesis. The protein is Rho GTPase-activating protein 29 (ARHGAP29) of Homo sapiens (Human).